A 209-amino-acid chain; its full sequence is MARYTGPQCKLCRREGMKLYLKGERCFTDKCAFDRRPFAPGDHGREKKKLTQYGIQLRAKQTMKRIYGVLEAQFRRYYEKAAKKSGDTRENLVVQVERRLDNVVYRLGFAVNRTTARQLVSHGHFLVNGKKVNIPSYQVRPGDVIEVREKSKDILPIKNAIELNKDKNRMPWLSVDFENYKGVYERHPKLEEVIDLPVDVQAIIELYSR.

The S4 RNA-binding domain maps to 98 to 164; sequence RRLDNVVYRL…LPIKNAIELN (67 aa).

This sequence belongs to the universal ribosomal protein uS4 family. As to quaternary structure, part of the 30S ribosomal subunit. Contacts protein S5. The interaction surface between S4 and S5 is involved in control of translational fidelity.

In terms of biological role, one of the primary rRNA binding proteins, it binds directly to 16S rRNA where it nucleates assembly of the body of the 30S subunit. Its function is as follows. With S5 and S12 plays an important role in translational accuracy. The protein is Small ribosomal subunit protein uS4 of Thermosipho melanesiensis (strain DSM 12029 / CIP 104789 / BI429).